The following is a 323-amino-acid chain: Peridinin-chlorophyll a-binding protein 3 (323 aa).

A run of 2 repeats spans residues 1-173 (DGIA…RYVP) and 174-323 (DGPV…SAVV).

In terms of assembly, homotrimer.

The protein resides in the plastid. It is found in the chloroplast. In terms of biological role, water-soluble antenna for capture of solar energy in the blue-green range. Peridinin is an asymmetric carotenoid. This is Peridinin-chlorophyll a-binding protein 3 from Amphidinium carterae (Dinoflagellate).